The primary structure comprises 293 residues: Movement protein BC1 (293 aa).

The protein belongs to the begomovirus movement protein BC1 family. As to quaternary structure, binds to dimeric supercoiled plasmid DNA. Phosphorylated.

The protein resides in the host cell membrane. Its subcellular location is the host microsome membrane. It localises to the host endoplasmic reticulum membrane. In terms of biological role, transports viral genome to neighboring plant cells directly through plasmosdesmata, without any budding. The movement protein allows efficient cell to cell propagation, by bypassing the host cell wall barrier. Begomovirus genome is shuttled out of nucleus by Nuclear shuttle protein (NSP) and the movement protein transports the DNA-NSP complex to cell plasmodesmata and facilitates further movement across the cell wall. The sequence is that of Movement protein BC1 from Macroptilium lathyroides (Lima bean).